We begin with the raw amino-acid sequence, 262 residues long: Probable lipoprotein EnvF (262 aa).

A signal peptide spans 1-25; the sequence is MNKIHVTYKNLLLPITFIAATLISA. Cys26 carries the N-palmitoyl cysteine lipid modification. Cys26 is lipidated: S-diacylglycerol cysteine. The disordered stretch occupies residues 227–262; that stretch reads EAEKAQQLVEQSRKDIESQRKKAAGKMNEIQQTFKK. Residues 237-246 show a composition bias toward basic and acidic residues; it reads QSRKDIESQR.

It localises to the cell membrane. In Salmonella typhimurium (strain LT2 / SGSC1412 / ATCC 700720), this protein is Probable lipoprotein EnvF (envF).